Consider the following 324-residue polypeptide: tRNA dimethylallyltransferase (324 aa).

Residue 17–24 (GPTASGKT) participates in ATP binding. 19 to 24 (TASGKT) serves as a coordination point for substrate. Interaction with substrate tRNA stretches follow at residues 42–45 (DSAL), 166–170 (QRIQR), 251–256 (RCVGYR), and 284–291 (KRQITWLR).

This sequence belongs to the IPP transferase family. As to quaternary structure, monomer. It depends on Mg(2+) as a cofactor.

It catalyses the reaction adenosine(37) in tRNA + dimethylallyl diphosphate = N(6)-dimethylallyladenosine(37) in tRNA + diphosphate. Its function is as follows. Catalyzes the transfer of a dimethylallyl group onto the adenine at position 37 in tRNAs that read codons beginning with uridine, leading to the formation of N6-(dimethylallyl)adenosine (i(6)A). This chain is tRNA dimethylallyltransferase, found in Burkholderia orbicola (strain MC0-3).